A 731-amino-acid polypeptide reads, in one-letter code: Two pore channel protein 2 (731 aa).

Residues Met1–Arg68 are Cytoplasmic-facing. A helical membrane pass occupies residues Val69–Phe89. The Extracellular segment spans residues Thr90–Thr111. A helical transmembrane segment spans residues Ile112–Gly132. Topologically, residues Gln133–Asn139 are cytoplasmic. The helical transmembrane segment at Leu140–Leu160 threads the bilayer. Residues Ser161–Pro167 lie on the Extracellular side of the membrane. Residues Leu168–Lys188 traverse the membrane as a helical segment. The interval Lys187–Lys191 is interaction with phosphatidylinositol 3,5-bisphosphate. The Cytoplasmic portion of the chain corresponds to Thr189–Val203. The helical transmembrane segment at Gly204 to Ile224 threads the bilayer. The Extracellular segment spans residues Gly225–Tyr238. The helical; Pore-forming intramembrane region spans Phe239–Ile263. Residues Pro264 to Arg270 are Extracellular-facing. A helical transmembrane segment spans residues Ala271–Leu291. Residues Thr292–Tyr417 lie on the Cytoplasmic side of the membrane. Residues Phe418–Val438 traverse the membrane as a helical segment. At Leu439 to Asp449 the chain is on the extracellular side. The helical transmembrane segment at Asp450–Phe470 threads the bilayer. The Cytoplasmic segment spans residues Lys471–Asn486. Residues Val487 to Tyr507 form a helical membrane-spanning segment. Over Arg508–Leu524 the chain is Extracellular. The helical transmembrane segment at Trp525–Ile542 threads the bilayer. Over Ile543–Arg564 the chain is Cytoplasmic. Residues Ala565–Phe585 traverse the membrane as a helical segment. Residues Arg586–Asn618 lie on the Extracellular side of the membrane. 2 N-linked (GlcNAc...) asparagine glycosylation sites follow: Asn594 and Asn601. The segment at residues Phe619–Ile641 is an intramembrane region (helical; Pore-forming). Residues Leu642 to Tyr656 are Extracellular-facing. Residues Phe657–Leu677 form a helical membrane-spanning segment. The Cytoplasmic segment spans residues Glu678 to Arg731.

The protein belongs to the calcium channel alpha-1 subunit (TC 1.A.1.11) family. Two pore calcium channel subfamily. In terms of assembly, homodimer. Interacts with LRRK2. Interacts with HAX1. Interacts with MTOR; the interaction is required for TPCN2 ATP sensitivity. Found in a complex with LSM12, TPCN1 and TPCN2. Interacts with LSM12. In terms of processing, N-glycosylated. In terms of tissue distribution, widely expressed. Highly expressed in macrophages. Expressed in pigmented cells.

Its subcellular location is the late endosome membrane. It localises to the lysosome membrane. The protein resides in the melanosome membrane. It carries out the reaction Ca(2+)(in) = Ca(2+)(out). It catalyses the reaction Na(+)(in) = Na(+)(out). Its activity is regulated as follows. Regulated by Mg(2+) ions, cytosolic Mg(2+) selectively inhibits outward current while lysosomal Mg(2+) modestly inhibits both the outward and inward currents. In the absence of Mg(2+), NAADP readily activates TPCN2, with properties similar to PI(3,5)P2. Na(+) current is inhibited by ATP in a MTORC-dependent manner. ATP sensitivity is independent of PI(3,5)P2. Both current elicited by PI(3,5)P2 as well as NAADP are inhibited by tetrandrine. Intracellular channel initially characterized as a non-selective Ca(2+)-permeable channel activated by NAADP (nicotinic acid adenine dinucleotide phosphate), it is also a highly-selective Na(+) channel activated directly by PI(3,5)P2 (phosphatidylinositol 3,5-bisphosphate). Localizes to the lysosomal and late endosome membranes where it regulates organellar membrane excitability, membrane trafficking, and pH homeostasis. Is associated with a plethora of physiological processes, including mTOR-dependent nutrient sensing, skin pigmentation and autophagy. Ion selectivity is not fixed but rather agonist-dependent and under defined ionic conditions, can be readily activated by both NAADP and PI(3,5)P2. As calcium channel, it increases the pH in the lysosomal lumen, as sodium channel, it promotes lysosomal exocytosis. Plays a crucial role in endolysosomal trafficking in the endolysosomal degradation pathway and is potentially involved in the homeostatic control of many macromolecules and cell metabolites. Also expressed in melanosomes of pigmented cells where mediates a Ca(2+) channel and/or PI(3,5)P2-activated melanosomal Na(+) channel to acidify pH and inhibit tyrosinase activity required for melanogenesis and pigmentation. Unlike the voltage-dependent TPCN1, TPCN2 is voltage independent and can be activated solely by PI(3,5)P2 binding. In contrast, PI(4,5)P2, PI(3,4)P2, PI(3)P and PI(5)P have no obvious effect on channel activation. Its function is as follows. (Microbial infection) During Ebola virus (EBOV) infection, controls the movement of endosomes containing virus particles and is required by EBOV to escape from the endosomal network into the cell cytoplasm. In Mus musculus (Mouse), this protein is Two pore channel protein 2.